The chain runs to 137 residues: Putative transcriptional regulatory protein MJ0173 (137 aa).

It belongs to the Tfx family.

Its function is as follows. Putative transcriptional regulator. In Methanocaldococcus jannaschii (strain ATCC 43067 / DSM 2661 / JAL-1 / JCM 10045 / NBRC 100440) (Methanococcus jannaschii), this protein is Putative transcriptional regulatory protein MJ0173.